The sequence spans 3960 residues: Replicase polyprotein 1ab (3960 aa).

The C4-type; atypical zinc-finger motif lies at 8–28 (CTCTPNARVFMAEGQVYCTRC). The 112-residue stretch at 69 to 180 (ECSPAGACWL…EDFCPFECAM (112 aa)) folds into the Peptidase C31 domain. The interval 69-182 (ECSPAGACWL…FCPFECAMAT (114 aa)) is PCP1-alpha. Catalysis depends on for Nsp1-alpha papain-like cysteine proteinase activity residues Cys-76 and His-146. The tract at residues 199–200 (VS) is important for host EIF2AK2 inhibition. The PCP1-beta stretch occupies residues 263–382 (DTVPEGNCWW…IFRFGSHKWY (120 aa)). In terms of domain architecture, Peptidase C32 spans 263–383 (DTVPEGNCWW…FRFGSHKWYG (121 aa)). Active-site for Nsp1-beta papain-like cysteine proteinase activity residues include Cys-270 and His-339. The OTU-like stretch occupies residues 426–513 (LKHYSPPAEG…GEHWTVTVTP (88 aa)). Positions 428–535 (HYSPPAEGNC…QGCCGHKGGL (108 aa)) constitute a Peptidase C33 domain. Catalysis depends on for Nsp2 cysteine proteinase activity residues Cys-437 and His-506. 3 disordered regions span residues 809–882 (RWTP…ATPS), 899–979 (TPLS…GVLG), and 1156–1213 (PLAF…GGGP). The span at 810 to 819 (WTPPPPPPKV) shows a compositional bias: pro residues. Transmembrane regions (helical) follow at residues 1266–1286 (LCLFLCYSYPAFGIAPLLGVF), 1296–1316 (GVFGCWLAFAVGLFKPVSDPV), 1345–1365 (SLVVGPVGLGLAILGRLLGGA), 1368–1388 (IWHFLLRLGIVADCILAGAYV), 1583–1603 (LMAALHVACSMALHMLAGIYV), 1650–1670 (ALVAGFGIQEIALVVLIFVSI), 1685–1705 (CVLLAIASYVWVPLTWLLCVF), and 1719–1739 (ILWLVFFLISVNMPSGILAMV). The interval 1266 to 1388 (LCLFLCYSYP…ADCILAGAYV (123 aa)) is HD1. The segment at 1583–1745 (LMAALHVACS…LAMVLLVSLW (163 aa)) is HD2. The 204-residue stretch at 1810–2013 (GAFRTRKPSL…ALLAAKPELE (204 aa)) folds into the Peptidase S32 domain. Active-site charge relay system; for 3C-like serine proteinase activity residues include His-1848, Asp-1873, and Ser-1927. Helical transmembrane passes span 2012–2032 (LEGGLSTVQLLCVFFLLWRMM), 2060–2080 (FSFGMFVLSWLTPWSAQVLMI), 2092–2112 (WSLAFFSLGAVTGFVADLAAT), 2137–2157 (SPVPVITCGVVHLLAIILYLF), and 2164–2184 (HILVGDGVFSAAFFLRYFAEG). The segment at 2036-2157 (WTPLVAVSFF…HLLAIILYLF (122 aa)) is HD3. The interval 2329 to 2358 (PTPTPPPAPVPIPLPPKVLENGPNAWGDED) is disordered. Pro residues predominate over residues 2330 to 2344 (TPTPPPAPVPIPLPP). The NiRAN domain maps to 2488–2650 (IIDKLQGLTK…LPYKLYPVRG (163 aa)). In terms of domain architecture, RdRp catalytic spans 2889–3023 (GRCLEADLAS…YAESPTMPNY (135 aa)). The AV ZBD domain occupies 3144 to 3207 (GKKSRVCGYC…SPVGKGTSPL (64 aa)). Zn(2+) is bound by residues Cys-3150, Cys-3153, Cys-3163, Cys-3168, His-3171, His-3173, His-3175, His-3177, Cys-3184, His-3186, Cys-3193, and Cys-3196. Residues 3264-3416 (ASTALLPTCK…VFDIMPQTQL (153 aa)) enclose the (+)RNA virus helicase ATP-binding domain. 3292 to 3299 (GPPGAGKT) is an ATP binding site. Positions 3417–3545 (KTIWRFGQNI…AVHCDGQLIV (129 aa)) constitute a (+)RNA virus helicase C-terminal domain. Residues 3584–3680 (EGSSSPLPKV…LTKFVKGGAQ (97 aa)) form the AV-Nsp11N/CoV-Nsp15M domain. The region spanning 3682–3804 (LPETVFSTGR…MVWKDKTAYF (123 aa)) is the NendoU domain. Active-site residues include His-3713, His-3728, and Lys-3757.

Belongs to the arteriviridae polyprotein family. Nsp1-alpha papain-like: Interacts with host RNF31. As to quaternary structure, interacts with host EIF2AK2; this interaction occurs in host stress granules and leads to EIF2AK2 inhibition. Interacts with host G3BP1; this interaction probably plays a role in Nsp1-beta-mediated inhibition of host EIF2AK2. In terms of assembly, interacts with host DDX18; this interaction redistributes host DDX18 to the cytoplasm. Interacts with host IFITM1. As to quaternary structure, interacts with host DDX5. In terms of assembly, interacts with host OTULIN. Interacts with host LGALS3. Post-translationally, specific enzymatic cleavages in vivo by its own proteases yield mature proteins. Nsp1 is autocleaved into two subunits, Nsp1-alpha and Nsp1-beta. There are two alternative pathways for processing. Either nsp4-5 is cleaved, which represents the major pathway or the nsp5-6 and nsp6-7 are processed, which represents the minor pathway. The major pathway occurs when nsp2 acts as a cofactor for nsp4.

It localises to the host nucleus. It is found in the host cytoplasm. Its subcellular location is the host membrane. The protein localises to the host endoplasmic reticulum. The protein resides in the host perinuclear region. It carries out the reaction RNA(n) + a ribonucleoside 5'-triphosphate = RNA(n+1) + diphosphate. The enzyme catalyses ATP + H2O = ADP + phosphate + H(+). The catalysed reaction is Thiol-dependent hydrolysis of ester, thioester, amide, peptide and isopeptide bonds formed by the C-terminal Gly of ubiquitin (a 76-residue protein attached to proteins as an intracellular targeting signal).. It catalyses the reaction uridylyl-uridylyl-ribonucleotide-RNA = a 3'-end uridylyl-2',3'-cyclophospho-uridine-RNA + a 5'-end dephospho-ribonucleoside-RNA. Functionally, contains the activities necessary for the transcription of negative stranded RNA, leader RNA, subgenomic mRNAs and progeny virion RNA as well as proteinases responsible for the cleavage of the polyprotein into functional products. In terms of biological role, inhibits host IFN-beta production. Plays a role in the degradation of the host transcriptional activator CREBBP protein. The degradation of host CREBBP which is a key component of the IFN enhanceosome is likely responsible for the inhibition of interferon mediated by Nsp1-alpha. Also participates in the inhibition of host NF-kappa-B activation by counteracting LUBAC-dependent induction of NF-kappa-B. Reduces host NEMO ubiquitination by blocking the interaction between the two LUBAC complex components RNF31 and SHARPIN. Its function is as follows. Plays a role in blocking host mRNA nuclear export to the cytoplasm and subversion of host protein synthesis. Additionally, inhibits the interferon-activated JAK/STAT signal transduction by mediating the ubiquitination and subsequent proteasomal degradation of host KPNA1. Repurposes the host antiviral stress granules into a proviral platform to counteract the EIF2AK2/PKR restriction, thereby regulating the host inflammatory response. Multifunctional protein that acts as a viral protease and as a viral antagonist of host immune response. Cleaves the nsp2/nsp3 site in the viral polyprotein. Displays deubiquitinating activity that cleaves both ubiquitinated and ISGylated products and therefore inhibits ubiquitin and ISG15-dependent host innate immunity. Also deubiquinates host NFKBIA, thereby interfering with NFKBIA degradation and impairing subsequent NF-kappa-B activation. Functionally, plays a role in the inhibition of the immune response by interacting with host IFITM1. This interaction leads to the proteasomal degradation of the IFN-induced antiviral protein IFITM1. In terms of biological role, cleaves the majority of cleavage sites present in the C-terminus of the polyprotein. Triggers host apoptosis through caspase-3, -8, and -9 activations. Subverts host innate immune responses through its protease activity. Targets the NF-kappa-B essential modulator NEMO and mediates its cleavage. Blocks host interferon beta induction and downstream signaling by cleaving mitochondrial MAVS, dislodging it from the mitochondria. Impairs host defense by cleaving host mRNA-decapping enzyme DCP1A to attenuate its antiviral activity. Its function is as follows. Plays a role in the initial induction of autophagosomes from host endoplasmic reticulum. Plays a role in the inhibition of host STAT3 signaling pathway by inducing the degradation of STAT3. Functionally, responsible for replication and transcription of the viral RNA genome. In terms of biological role, displays RNA and DNA duplex-unwinding activities with 5' to 3' polarity. Its function is as follows. Plays a role in viral transcription/replication and prevents the simultaneous activation of host cell dsRNA sensors, such as MDA5/IFIH1, OAS, PKR and NLRP3 inflammasome. Acts by degrading the 5'-polyuridines generated during replication of the poly(A) region of viral genomic and subgenomic RNAs. Catalyzes a two-step reaction in which a 2'3'-cyclic phosphate (2'3'-cP) is first generated by 2'-O transesterification, which is then hydrolyzed to a 3'-phosphate (3'-P). If not degraded, poly(U) RNA would hybridize with poly(A) RNA tails and activate host dsRNA sensors. Also plays a role in the inhibition of host type I interferon production by recruiting host OTULIN to promote removal of linear ubiquitination targeting host NEMO. This Porcine reproductive and respiratory syndrome virus (strain VR-2332) (PRRSV) protein is Replicase polyprotein 1ab (rep).